Consider the following 31-residue polypeptide: MLTLLSYFGFLFAILTLTSVLFIGLNKIQLI.

The helical transmembrane segment at 4–24 threads the bilayer; sequence LLSYFGFLFAILTLTSVLFIG.

It belongs to the PetL family. The 4 large subunits of the cytochrome b6-f complex are cytochrome b6, subunit IV (17 kDa polypeptide, PetD), cytochrome f and the Rieske protein, while the 4 small subunits are PetG, PetL, PetM and PetN. The complex functions as a dimer.

It is found in the plastid. The protein localises to the chloroplast thylakoid membrane. Functionally, component of the cytochrome b6-f complex, which mediates electron transfer between photosystem II (PSII) and photosystem I (PSI), cyclic electron flow around PSI, and state transitions. PetL is important for photoautotrophic growth as well as for electron transfer efficiency and stability of the cytochrome b6-f complex. This is Cytochrome b6-f complex subunit 6 from Angiopteris evecta (Mule's foot fern).